Consider the following 484-residue polypeptide: Glycogen synthase (484 aa).

Lys21 serves as a coordination point for ADP-alpha-D-glucose.

It belongs to the glycosyltransferase 1 family. Bacterial/plant glycogen synthase subfamily.

It catalyses the reaction [(1-&gt;4)-alpha-D-glucosyl](n) + ADP-alpha-D-glucose = [(1-&gt;4)-alpha-D-glucosyl](n+1) + ADP + H(+). It functions in the pathway glycan biosynthesis; glycogen biosynthesis. Functionally, synthesizes alpha-1,4-glucan chains using ADP-glucose. This is Glycogen synthase from Pseudomonas syringae pv. tomato (strain ATCC BAA-871 / DC3000).